We begin with the raw amino-acid sequence, 1103 residues long: Detocs histidine-protein kinase DtcA (1103 aa).

His-758 bears the Phosphohistidine; by autocatalysis mark. Residues 818 to 851 (TIINDAKEKVHINTGEFIESAKVFNYAIEIEFVE) form a TPR repeat.

Autophosphorylated.

It catalyses the reaction ATP + protein L-histidine = ADP + protein N-phospho-L-histidine.. Its function is as follows. Sensor-kinase member of the two-component regulatory system Detocs that confers resistance to bacteriophage. When the system (DtcA-DtcB-DtcC) is expressed in a susceptible E.coli (strain MG1655) it confers resistance to bacteriophages T2, T4, T5, T7, SECphi4, SECphi6 and SECphi27; the level of resistance varies, resistance to T2, T7 and SECphi4 is not very high. DtcA (this subunit) probably autophosphorylates upon sensing viral infection, and subsequently transfers the phosphate signal to DtcC which activates it, leading to an antiviral defense; DtcB may scavenge phosphorylation signals from accidental activation of DtcA. The sequence is that of Detocs histidine-protein kinase DtcA from Enterobacter cloacae (strain JD6301).